Reading from the N-terminus, the 159-residue chain is Immunogenic protein MPB63 (159 aa).

The signal sequence occupies residues 1-29; that stretch reads MKLTTMIKTAVAVVAMAAIATFAAPVALA.

The protein resides in the secreted. The polypeptide is Immunogenic protein MPB63 (mpb63) (Mycobacterium bovis (strain ATCC BAA-935 / AF2122/97)).